Consider the following 120-residue polypeptide: Membrane-anchored ubiquitin-fold protein 4 (120 aa).

The region spanning 7 to 73 (VELKFRLYDG…LENGKTVAQC (67 aa)) is the Ubiquitin-like domain. C115 carries the S-palmitoyl cysteine lipid modification. Position 117 is a cysteine methyl ester (C117). Residue C117 is the site of S-farnesyl cysteine attachment. A propeptide spans 118-120 (TIM) (removed in mature form).

As to expression, ubiquitous.

It is found in the cell membrane. May serve as docking site to facilitate the association of other proteins to the plasma membrane. The protein is Membrane-anchored ubiquitin-fold protein 4 (MUB4) of Arabidopsis thaliana (Mouse-ear cress).